We begin with the raw amino-acid sequence, 395 residues long: Multidrug resistance protein MdtL (395 aa).

A run of 12 helical transmembrane segments spans residues 4-24 (FLLC…MYLV), 42-62 (IAFS…GKIA), 69-89 (PVAI…SRAS), 93-113 (LFLS…VVAF), 131-151 (LLNG…HLIM), 158-178 (SLFY…LFIL), 217-237 (VSVI…VMGF), 247-267 (ALTA…LGLF), 271-291 (TLML…SLAH), 295-315 (VTLF…GVAM), 328-350 (VASS…LAAI), and 355-377 (AMNM…IFSV).

It belongs to the major facilitator superfamily. DHA1 family. MdtL (TC 2.A.1.2.22) subfamily.

The protein localises to the cell inner membrane. The protein is Multidrug resistance protein MdtL of Salmonella newport (strain SL254).